The primary structure comprises 368 residues: Glycolate oxidase 3 (368 aa).

M1 is subject to N-acetylmethionine. An FMN hydroxy acid dehydrogenase domain is found at 1–359 (MEITNVMEYE…SRTHIKTDWD (359 aa)). Glyoxylate is bound at residue Y24. FMN is bound by residues 77 to 79 (PTA), S106, 127 to 129 (QLY), and T155. A glyoxylate-binding site is contributed by Y129. R164 lines the glyoxylate pocket. FMN contacts are provided by K230 and S252. Residues H254 and R257 each coordinate glyoxylate. H254 functions as the Proton acceptor in the catalytic mechanism. FMN is bound by residues 285-289 (DGGVR) and 308-309 (GR).

It belongs to the FMN-dependent alpha-hydroxy acid dehydrogenase family. In terms of assembly, homotetramer. Requires FMN as cofactor.

It is found in the peroxisome. It carries out the reaction glycolate + O2 = glyoxylate + H2O2. The protein operates within photosynthesis; photorespiration; glycine from 2-phosphoglycolate: step 2/3. Functionally, catalyzes the oxidation of glycolate to glyoxylate, with a reduction of O2 to H2O2. Is a key enzyme in photorespiration in green plants. This Arabidopsis thaliana (Mouse-ear cress) protein is Glycolate oxidase 3 (GLO5).